The sequence spans 170 residues: ATP synthase subunit b (170 aa).

Residues 15–37 (LNLFETNVLNWAVVVFGLYKFLP) form a helical membrane-spanning segment.

Belongs to the ATPase B chain family. F-type ATPases have 2 components, F(1) - the catalytic core - and F(0) - the membrane proton channel. F(1) has five subunits: alpha(3), beta(3), gamma(1), delta(1), epsilon(1). F(0) has four main subunits: a(1), b(1), b'(1) and c(10-14). The alpha and beta chains form an alternating ring which encloses part of the gamma chain. F(1) is attached to F(0) by a central stalk formed by the gamma and epsilon chains, while a peripheral stalk is formed by the delta, b and b' chains.

The protein resides in the cellular thylakoid membrane. Its function is as follows. F(1)F(0) ATP synthase produces ATP from ADP in the presence of a proton or sodium gradient. F-type ATPases consist of two structural domains, F(1) containing the extramembraneous catalytic core and F(0) containing the membrane proton channel, linked together by a central stalk and a peripheral stalk. During catalysis, ATP synthesis in the catalytic domain of F(1) is coupled via a rotary mechanism of the central stalk subunits to proton translocation. Component of the F(0) channel, it forms part of the peripheral stalk, linking F(1) to F(0). This chain is ATP synthase subunit b, found in Prochlorococcus marinus (strain MIT 9515).